Consider the following 378-residue polypeptide: Stimulator of interferon genes protein (378 aa).

The Cytoplasmic portion of the chain corresponds to 1-17 (MPHSSLHPSIPQPRGLR). The tract at residues 1–190 (MPHSSLHPSI…IYNQFHNNTL (190 aa)) is mediates interaction with ZDHHC1 and ZDHHC11. Residues 18–34 (AQKAALVLLSACLVALW) traverse the membrane as a helical segment. Over 35–44 (GLGEPPDYTL) the chain is Lumenal. The chain crosses the membrane as a helical span at residues 45 to 69 (KWLVLHLASQQMGLLIKGICSLAEE). Residues 70 to 91 (LCHVHSRYHGSYWRAVRACLCS) lie on the Cytoplasmic side of the membrane. Cysteine 88 carries the S-palmitoyl cysteine lipid modification. The helical transmembrane segment at 92-106 (SMRCGALLLLSCYFY) threads the bilayer. Residues 107-116 (CSLPNMADLP) are Lumenal-facing. A helical transmembrane segment spans residues 117–134 (FTWMLALLGLSQALNILL). Residues 135–378 (GLQGLAPAEV…KPLPLRSDVF (244 aa)) are Cytoplasmic-facing. Lysine 150 is covalently cross-linked (Glycyl lysine isopeptide (Lys-Gly) (interchain with G-Cter in ubiquitin)). The segment at 153–339 (FNVAHGLAWS…LQHLRQEERE (187 aa)) is cyclic dinucleotide-binding domain (CBD). Positions 162 and 167 each coordinate 2',3'-cGAMP. The 3',3'-c-di-GMP site is built by serine 162 and tyrosine 167. Tyrosine 167 is a 2',3'-cUAMP binding site. Residue lysine 236 forms a Glycyl lysine isopeptide (Lys-Gly) (interchain with G-Cter in ubiquitin) linkage. Positions 238 and 263 each coordinate 2',3'-cGAMP. Positions 238 and 263 each coordinate 2',3'-cUAMP. Residues 238–241 (RVYT) and threonine 263 each bind 3',3'-c-di-GMP. Residues 339 to 378 (EVTMGSTETSVMPGSSVLSQEPELLISGLEKPLPLRSDVF) are C-terminal tail (CTT). At serine 354 the chain carries Phosphoserine. Residues serine 357 and serine 365 each carry the phosphoserine; by TBK1 modification. Residues 362–365 (LLIS) carry the pLxIS motif motif.

It belongs to the STING family. In terms of assembly, homodimer; forms a homodimer in absence of cyclic nucleotide (c-di-GMP or cGAMP); 'Lys-63'-linked ubiquitination at Lys-150 is required for homodimerization. Homotetramer; in presence of cyclic nucleotide (c-di-GMP or cGAMP), forms tetramers and higher-order oligomers through side-by-side packing. Interacts (when phosphorylated) with IRF3; following activation and phosphorylation on the pLxIS motif by TBK1, recruits IRF3. Interacts with RIGI, MAVS and SSR2. Interacts with RNF5 and TRIM56. Interacts with TBK1; when homodimer, leading to subsequent production of IFN-beta. Interacts with IFIT1 and IFIT2. Interacts with TRIM29; this interaction induces STING1 ubiquitination and subsequent degradation. Associates with the MHC-II complex. Interacts with STEEP1; interaction takes place upon cGAMP-activation and STING1 phosphorylation by MAP3K7/TAK1 and promotes STING1 translocation to COPII vesicles. Interacts with SEC24A, SEC24B and SEC24C; promoting translocation to COPII vesicles. Interacts (when ubiquitinated) with SQSTM1; leading to relocalization to autophagosomes. Interacts with SURF4. Interacts with HNRNPA2B1. Interacts with ZDHHC1; ZDHHC1 constitutively interacts with STING1 and in presence of DNA viruses activates it by promoting its cGAMP-induced oligomerization and the recruitment of downstream signaling components. Interacts with ZDHHC11; in presence of DNA viruses promotes the recruitment of IRF3 to STING1. Interacts with TOMM70. Interacts with TAB1; promoting recruitment of TAB1 to the endoplasmic reticulum membrane and subsequent activation of MAP3K7/TAK1. Interacts (via transmembrane domain) with TMEM203. Interacts with DDX41. Post-translationally, phosphorylation by TBK1 leads to activation and production of IFN-beta. Following cyclic nucleotide (c-di-GMP or cGAMP)-binding, activation and translocation from the endoplasmic reticulum, STING1 is phosphorylated by TBK1 at Ser-365 in the pLxIS motif. The phosphorylated pLxIS motif constitutes an IRF3-binding motif, leading to recruitment of the transcription factor IRF3 to induce type-I interferons and other cytokines. Phosphorylated on tyrosine residues upon MHC-II aggregation. Dephosphorylation by PPP6C leads to inactivation and decreased production of IFN-beta. Phosphorylation at Ser-357 is also required to activate IRF3. Phosphorylation at Ser-354 by MAP3K7/TAK1 facilitates its interaction with STEEP1, promoting STING1 translocation to COPII vesicles. Ubiquitinated. Ubiquitinated via 'Lys-63'-linked ubiquitin chains in response to double-stranded DNA treatment, leading to relocalization to autophagosomes and subsequent degradation; this process is dependent on SQSTM1. 'Lys-63'-linked ubiquitination mediated by TRIM56 at Lys-150 promotes homodimerization and recruitment of the antiviral kinase TBK1 and subsequent production of IFN-beta. 'Lys-48'-linked polyubiquitination at Lys-150 occurring after viral infection is mediated by RNF5 and leads to proteasomal degradation. 'Lys-11'-linked polyubiquitination at Lys-150 by RNF26 leads to stabilize STING1: it protects STING1 from RNF5-mediated 'Lys-48'-linked polyubiquitination. 'Lys-33'-linked and 'Lys-48'-linked deubiquitinated by USP20; leading to its stabilization and promotion of innate antiviral response. 'Lys-48'-linked deubiquitinated by USP44; leading to its stabilization and promotion of innate antiviral response. 'Lys-63'-linked deubiquitinated by USP49; leading to inhibition of the subsequent recruitment of TBK1 to the signaling complex. 'Lys-63'-linked ubiquitination mediated by RNF39 promotes the activation of the cGAS-STING pathway. In terms of processing, palmitoylation takes place in the Golgi apparatus and creates a platform for the recruitment of TBK1.

Its subcellular location is the endoplasmic reticulum membrane. It localises to the cytoplasm. It is found in the perinuclear region. The protein localises to the endoplasmic reticulum-Golgi intermediate compartment membrane. The protein resides in the golgi apparatus membrane. Its subcellular location is the cytoplasmic vesicle. It localises to the autophagosome membrane. It is found in the mitochondrion outer membrane. The protein localises to the cell membrane. The enzyme catalyses H(+)(in) = H(+)(out). Its function is as follows. Facilitator of innate immune signaling that acts as a sensor of cytosolic DNA from bacteria and viruses and promotes the production of type I interferon (IFN-alpha and IFN-beta). Innate immune response is triggered in response to non-CpG double-stranded DNA from viruses and bacteria delivered to the cytoplasm. Acts by binding cyclic dinucleotides: recognizes and binds cyclic di-GMP (c-di-GMP), a second messenger produced by bacteria, cyclic UMP-AMP (2',3'-cUAMP), and cyclic GMP-AMP (cGAMP), a messenger produced by CGAS in response to DNA virus in the cytosol. Upon binding to c-di-GMP or cGAMP, STING oligomerizes, translocates from the endoplasmic reticulum and is phosphorylated by TBK1 on the pLxIS motif, leading to recruitment and subsequent activation of the transcription factor IRF3 to induce expression of type I interferon and exert a potent anti-viral state. Exhibits 2',3' phosphodiester linkage-specific ligand recognition: can bind both 2'-3' linked cGAMP (2'-3'-cGAMP) and 3'-3' linked cGAMP but is preferentially activated by 2'-3' linked cGAMP. The preference for 2'-3'-cGAMP, compared to other linkage isomers is probably due to the ligand itself, whichs adopts an organized free-ligand conformation that resembles the STING1-bound conformation and pays low energy costs in changing into the active conformation. In addition to promote the production of type I interferons, plays a direct role in autophagy. Following cGAMP-binding, STING1 buds from the endoplasmic reticulum into COPII vesicles, which then form the endoplasmic reticulum-Golgi intermediate compartment (ERGIC). The ERGIC serves as the membrane source for WIPI2 recruitment and LC3 lipidation, leading to formation of autophagosomes that target cytosolic DNA or DNA viruses for degradation by the lysosome. Promotes autophagy by acting as a proton channel that directs proton efflux from the Golgi to facilitate MAP1LC3B/LC3B lipidation. The autophagy- and interferon-inducing activities can be uncoupled and autophagy induction is independent of TBK1 phosphorylation. Autophagy is also triggered upon infection by bacteria: following c-di-GMP-binding, which is produced by live Gram-positive bacteria, promotes reticulophagy. May be involved in translocon function, the translocon possibly being able to influence the induction of type I interferons. May be involved in transduction of apoptotic signals via its association with the major histocompatibility complex class II (MHC-II). The protein is Stimulator of interferon genes protein of Bos taurus (Bovine).